The primary structure comprises 388 residues: Chorismate synthase (388 aa).

NADP(+)-binding residues include Arg39 and Arg45. Residues 132–134 (RSS), 251–252 (NA), Gly296, 311–315 (KPIPT), and Arg337 contribute to the FMN site.

Homotetramer. FMNH2 is required as a cofactor.

It carries out the reaction 5-O-(1-carboxyvinyl)-3-phosphoshikimate = chorismate + phosphate. Its pathway is metabolic intermediate biosynthesis; chorismate biosynthesis; chorismate from D-erythrose 4-phosphate and phosphoenolpyruvate: step 7/7. In terms of biological role, catalyzes the anti-1,4-elimination of the C-3 phosphate and the C-6 proR hydrogen from 5-enolpyruvylshikimate-3-phosphate (EPSP) to yield chorismate, which is the branch point compound that serves as the starting substrate for the three terminal pathways of aromatic amino acid biosynthesis. This reaction introduces a second double bond into the aromatic ring system. This is Chorismate synthase from Staphylococcus aureus.